A 477-amino-acid chain; its full sequence is Probable periplasmic serine endoprotease DegP-like (477 aa).

Positions 1 to 27 are cleaved as a signal peptide; the sequence is MSIPRLKSYLTMFAAVLMLGQVLTAQA. Residues His-117, Asp-147, and Ser-220 each act as charge relay system in the active site. Substrate is bound by residues 218 to 220 and 275 to 279; these read GNS and LGVVI. 2 consecutive PDZ domains span residues 264-355 and 361-466; these read LKKD…IRNG and DISV…LRQG.

The protein belongs to the peptidase S1C family.

Its subcellular location is the periplasm. The catalysed reaction is Acts on substrates that are at least partially unfolded. The cleavage site P1 residue is normally between a pair of hydrophobic residues, such as Val-|-Val.. In terms of biological role, might be efficient in the degradation of transiently denatured and unfolded proteins which accumulate in the periplasm following stress conditions. In Pseudomonas putida (strain GB-1), this protein is Probable periplasmic serine endoprotease DegP-like.